The chain runs to 543 residues: Zinc finger CCCH-type with G patch domain-containing protein (543 aa).

2 disordered regions span residues 55–79 (AATS…DNPI) and 95–132 (TEDS…DKLD). Positions 65–76 (DTAGRAPPATAD) are enriched in low complexity. Residues 118–131 (DDDADNDDDADDKL) show a composition bias toward acidic residues. The segment at 186–209 (PCAYFLEGECRFTDEKCRYSHGEV) adopts a C3H1-type zinc-finger fold. Residues 272–304 (PFEDLLPLDEDEDGQEAAEDSESDTDGADEEEA) are disordered. The segment covering 277-304 (LPLDEDEDGQEAAEDSESDTDGADEEEA) has biased composition (acidic residues). The G-patch domain maps to 335 to 381 (TRGIGSKIMQKMGYIVGTGLGREGEGIVVPVSAQVLPQGRSLDYCME). The segment at 438–460 (GAAGGESSRPNRNRPGALSRQEL) is disordered.

It is found in the nucleus. In terms of biological role, transcription repressor. This is Zinc finger CCCH-type with G patch domain-containing protein from Anopheles gambiae (African malaria mosquito).